Reading from the N-terminus, the 436-residue chain is Phosphomethylpyrimidine synthase (436 aa).

Substrate contacts are provided by residues Asn68, Met97, Tyr126, His166, 188-190 (SRG), 229-232 (DGFR), and Glu268. A Zn(2+)-binding site is contributed by His272. Tyr295 contacts substrate. His336 is a Zn(2+) binding site. Residues Cys412, Cys415, and Cys419 each contribute to the [4Fe-4S] cluster site.

This sequence belongs to the ThiC family. In terms of assembly, homodimer. [4Fe-4S] cluster serves as cofactor.

The enzyme catalyses 5-amino-1-(5-phospho-beta-D-ribosyl)imidazole + S-adenosyl-L-methionine = 4-amino-2-methyl-5-(phosphooxymethyl)pyrimidine + CO + 5'-deoxyadenosine + formate + L-methionine + 3 H(+). Its pathway is cofactor biosynthesis; thiamine diphosphate biosynthesis. Catalyzes the synthesis of the hydroxymethylpyrimidine phosphate (HMP-P) moiety of thiamine from aminoimidazole ribotide (AIR) in a radical S-adenosyl-L-methionine (SAM)-dependent reaction. In Geobacter metallireducens (strain ATCC 53774 / DSM 7210 / GS-15), this protein is Phosphomethylpyrimidine synthase.